The following is a 216-amino-acid chain: MDRKDKARKNFSSSSSSSAASMAALAAAAAAGDGGAALPSPMEEDKKPRLVASSLAPVAGGGGGGSSSSAAVAAGASSSSSSSSVAAAARRGAGRAGGGAPSGGGGGPRCQVERCGVDLSEAGRYNRRHKVCQTHSKEPVVLVAGLRQRFCQQCSRFHELTEFDDAKRSCRRRLAGHNERRRKSAADTAHGENCRHADQDAGRSHQGTGNPPFQIR.

The segment at G32–C110 is disordered. Over residues S67–R91 the composition is skewed to low complexity. Positions G94–P108 are enriched in gly residues. The SBP-type zinc-finger motif lies at G107 to S184. Positions 110, 115, 132, 135, 151, 154, 158, and 170 each coordinate Zn(2+). The Bipartite nuclear localization signal signature appears at K167–K183. The disordered stretch occupies residues A175–R216. Over residues A189–R203 the composition is skewed to basic and acidic residues. Residues H205–R216 show a composition bias toward polar residues.

In terms of tissue distribution, ubiquitous.

The protein resides in the nucleus. Functionally, trans-acting factor that binds specifically to the consensus nucleotide sequence 5'-TNCGTACAA-3'. May be involved in panicle development. The sequence is that of Squamosa promoter-binding-like protein 13 (SPL13) from Oryza sativa subsp. japonica (Rice).